The chain runs to 334 residues: MDRTLIQEILEVVEQAAIASAHLTGLGKKDEADAAAVEAMRKRMGKIEMQGRIVIGEGERDEAPMLYIGEEVGSGSGPGVDFAVDPCEGTNLCANNQRGSMAVLAASDRGGLFNAPDFYMKKLAAPPSAKGKVDIRKSATENINILSQCLGLAVSELTIVVMDRARHKGLISEIRATGARVQPISDGDVQAAIACGFAGTGTHCLMGIGAAPEGVISAAAMRALGGHFQGQLVYDPAIAQTSEWADYTKEGNIARLNEMGITDVDKIYEAEELASGNNVVFAGSGITDGLLFHGVKFEPDCTRTSSLVISTLDNTARFTNTVHIKDGAKSIALS.

Residues D33, E57, D85, and E88 each contribute to the Mn(2+) site. Residues 88-90, Y119, 164-166, and 186-188 each bind substrate; these read EGT, RAR, and DGD. Residue E213 coordinates Mn(2+).

This sequence belongs to the FBPase class 2 family. Homotetramer. The cofactor is Mn(2+).

It catalyses the reaction beta-D-fructose 1,6-bisphosphate + H2O = beta-D-fructose 6-phosphate + phosphate. The catalysed reaction is D-sedoheptulose 1,7-bisphosphate + H2O = D-sedoheptulose 7-phosphate + phosphate. It functions in the pathway carbohydrate biosynthesis; Calvin cycle. Catalyzes the hydrolysis of fructose 1,6-bisphosphate (Fru 1,6-P2) and sedoheptulose 1,7-bisphosphate (Sed 1,7-P2) to fructose 6-phosphate and sedoheptulose 7-phosphate, respectively. This Prochlorococcus marinus (strain MIT 9303) protein is D-fructose 1,6-bisphosphatase class 2/sedoheptulose 1,7-bisphosphatase.